A 151-amino-acid chain; its full sequence is MNSLHAHLLLLAVCCVGYIASSPVIGQDQRSGDSDADVLLAADEMADNGGDNIDKRVERYAFGLGRRAYMYTNGGPGMKRLPVYNFGLGKRSRPYSFGLGKRSDYDYDQDNEIDYRVPPANYLAAERAVRPGRQNKRTTRPQPFNFGLGRR.

The first 21 residues, 1–21 (MNSLHAHLLLLAVCCVGYIAS), serve as a signal peptide directing secretion. Positions 22 to 54 (SPVIGQDQRSGDSDADVLLAADEMADNGGDNID) are excised as a propeptide. 3 positions are modified to leucine amide: leucine 64, leucine 88, and leucine 99. The propeptide occupies 103–135 (SDYDYDQDNEIDYRVPPANYLAAERAVRPGRQN). The tract at residues 131-151 (PGRQNKRTTRPQPFNFGLGRR) is disordered. Leucine 148 carries the leucine amide modification.

The protein belongs to the allatostatin family.

It localises to the secreted. In terms of biological role, may act as a neurotransmitter or neuromodulator. The polypeptide is Allatostatin-A (AstA) (Drosophila melanogaster (Fruit fly)).